Reading from the N-terminus, the 501-residue chain is UDP-N-acetylmuramoyl-L-alanyl-D-glutamate--2,6-diaminopimelate ligase (501 aa).

Ser-29 lines the UDP-N-acetyl-alpha-D-muramoyl-L-alanyl-D-glutamate pocket. Gly-112 to Ser-118 is an ATP binding site. UDP-N-acetyl-alpha-D-muramoyl-L-alanyl-D-glutamate contacts are provided by residues Thr-161–Thr-162, Ser-188, and Arg-196. Residue Lys-228 is modified to N6-carboxylysine. Meso-2,6-diaminopimelate is bound by residues Arg-393, Asp-417 to Arg-420, Gly-468, and Glu-472. The Meso-diaminopimelate recognition motif signature appears at Asp-417–Arg-420.

Belongs to the MurCDEF family. MurE subfamily. Mg(2+) serves as cofactor. In terms of processing, carboxylation is probably crucial for Mg(2+) binding and, consequently, for the gamma-phosphate positioning of ATP.

The protein resides in the cytoplasm. The catalysed reaction is UDP-N-acetyl-alpha-D-muramoyl-L-alanyl-D-glutamate + meso-2,6-diaminopimelate + ATP = UDP-N-acetyl-alpha-D-muramoyl-L-alanyl-gamma-D-glutamyl-meso-2,6-diaminopimelate + ADP + phosphate + H(+). Its pathway is cell wall biogenesis; peptidoglycan biosynthesis. Functionally, catalyzes the addition of meso-diaminopimelic acid to the nucleotide precursor UDP-N-acetylmuramoyl-L-alanyl-D-glutamate (UMAG) in the biosynthesis of bacterial cell-wall peptidoglycan. The protein is UDP-N-acetylmuramoyl-L-alanyl-D-glutamate--2,6-diaminopimelate ligase of Acidovorax sp. (strain JS42).